The sequence spans 912 residues: Transferrin-binding protein A (912 aa).

The signal sequence occupies residues Met-1–Ala-23. Positions Glu-50–Glu-57 match the TonB box motif. The TBDR plug domain occupies Lys-63–Lys-188. A TBDR beta-barrel domain is found at Ser-199 to Phe-912. The short motif at Thr-895 to Phe-912 is the TonB C-terminal box element.

It belongs to the TonB-dependent receptor family.

Its subcellular location is the cell outer membrane. Haemophilus acquires iron by extracting it from serum transferrin (TF) in its human host. Acts as a transferrin receptor and is required for transferrin utilization. The polypeptide is Transferrin-binding protein A (Haemophilus influenzae (strain ATCC 51907 / DSM 11121 / KW20 / Rd)).